We begin with the raw amino-acid sequence, 503 residues long: uncharacterized protein (503 aa).

The next 12 membrane-spanning stretches (helical) occupy residues F20 to M40, L43 to L63, V106 to A126, L138 to F158, A166 to I186, V215 to I235, L249 to I269, Y301 to S321, V359 to L379, L405 to L425, G443 to W463, and T468 to S488.

It to M.genitalium MG225.

The protein localises to the cell membrane. This is an uncharacterized protein from Mycoplasma pneumoniae (strain ATCC 29342 / M129 / Subtype 1) (Mycoplasmoides pneumoniae).